Consider the following 100-residue polypeptide: Enhancer of yellow 2 transcription factor (100 aa).

It belongs to the ENY2 family. As to quaternary structure, component of the nuclear pore complex (NPC)-associated AMEX complex (anchoring and mRNA export complex), composed of at least e(y)2 and xmas-2. Component of the SAGA transcription coactivator-HAT complexes, at least composed of Ada2b, e(y)2, Pcaf/Gcn5, Taf10 and Nipped-A/Trrap. Within the SAGA complex, e(y)2, Sgf11, and not/nonstop form an additional subcomplex of SAGA called the DUB module (deubiquitination module). Component of the THO complex, composed of at least e(y)2, HPR1, THO2, THOC5, THOC6 and THOC7. Interacts with e(y)1. Interacts with su(Hw) (via zinc fingers). Interacts with xmas-2; required for localization to the nuclear periphery. Interacts with the nuclear pore complex (NPC).

It is found in the nucleus. Its subcellular location is the nucleoplasm. The protein resides in the cytoplasm. In terms of biological role, involved in mRNA export coupled transcription activation by association with both the AMEX and the SAGA complexes. The SAGA complex is a multiprotein complex that activates transcription by remodeling chromatin and mediating histone acetylation and deubiquitination. Within the SAGA complex, participates in a subcomplex that specifically deubiquitinates histone H2B. The SAGA complex is recruited to specific gene promoters by activators, where it is required for transcription. Required for nuclear receptor-mediated transactivation. Involved in transcription elongation by recruiting the THO complex onto nascent mRNA. The AMEX complex functions in docking export-competent ribonucleoprotein particles (mRNPs) to the nuclear entrance of the nuclear pore complex (nuclear basket). AMEX participates in mRNA export and accurate chromatin positioning in the nucleus by tethering genes to the nuclear periphery. This Drosophila ananassae (Fruit fly) protein is Enhancer of yellow 2 transcription factor.